Consider the following 217-residue polypeptide: MKPLSPLTLSFLLFVFITTLSLAFSNEDVEQVLDVNGKPIFPGGQYYILPAIRGPPGGGVRLGRTGDLTCPVTVLQDRREVKNGLPVKFVIPGISPGIIFTGTPIEIEYTKKPNCAKSSKWLVFVDNVIQKACVGIGGPENYPGIQTLSGLFKIEKHESGFGYKLGFCIKGSPTCLDVGRFDNDEAGRRLNLTEHESFQVVFVEAEANDAEFIKSVV.

The signal sequence occupies residues methionine 1–asparagine 26. Cystine bridges form between cysteine 70-cysteine 115 and cysteine 168-cysteine 175. Asparagine 191 carries N-linked (GlcNAc...) asparagine glycosylation.

The protein belongs to the protease inhibitor I3 (leguminous Kunitz-type inhibitor) family.

It is found in the secreted. Might act as a protease inhibitor involved in plant defense responses. The protein is Kunitz-type trypsin inhibitor-like 2 protein (PIP20-2) of Pisum sativum (Garden pea).